Reading from the N-terminus, the 962-residue chain is Glycine dehydrogenase (decarboxylating) (962 aa).

K709 is subject to N6-(pyridoxal phosphate)lysine.

The protein belongs to the GcvP family. The glycine cleavage system is composed of four proteins: P, T, L and H. It depends on pyridoxal 5'-phosphate as a cofactor.

It carries out the reaction N(6)-[(R)-lipoyl]-L-lysyl-[glycine-cleavage complex H protein] + glycine + H(+) = N(6)-[(R)-S(8)-aminomethyldihydrolipoyl]-L-lysyl-[glycine-cleavage complex H protein] + CO2. Functionally, the glycine cleavage system catalyzes the degradation of glycine. The P protein binds the alpha-amino group of glycine through its pyridoxal phosphate cofactor; CO(2) is released and the remaining methylamine moiety is then transferred to the lipoamide cofactor of the H protein. The polypeptide is Glycine dehydrogenase (decarboxylating) (Shewanella pealeana (strain ATCC 700345 / ANG-SQ1)).